The sequence spans 116 residues: MEVEILDQRDNPLLYRKEVKFVVRHEDSGTPQKSEVLRKLAAILDVDKEVVLIDRMESEFGKRETKGYAKIYKSMEHLEDIEPEHMVERHKKVLEELESESEESEESESEESEEEE.

A disordered region spans residues 81-116; the sequence is IEPEHMVERHKKVLEELESESEESEESESEESEEEE. Residues 96 to 116 show a composition bias toward acidic residues; sequence ELESESEESEESESEESEEEE.

This sequence belongs to the eukaryotic ribosomal protein eS24 family.

This chain is Small ribosomal subunit protein eS24, found in Methanopyrus kandleri (strain AV19 / DSM 6324 / JCM 9639 / NBRC 100938).